Consider the following 353-residue polypeptide: Photosystem II protein D1 (353 aa).

Thr-2 carries the N-acetylthreonine modification. At Thr-2 the chain carries Phosphothreonine. A run of 3 helical transmembrane segments spans residues 29 to 46 (YIGW…TATS), 118 to 133 (HFLL…EWEL), and 142 to 156 (WIAV…AATA). Chlorophyll a is bound at residue His-118. Tyr-126 contacts pheophytin a. The [CaMn4O5] cluster site is built by Asp-170 and Glu-189. Residues 197–218 (FHMLGVAGVFGGSLFSAMHGSL) form a helical membrane-spanning segment. Residue His-198 coordinates chlorophyll a. A quinone is bound by residues His-215 and 264–265 (SF). His-215 is a Fe cation binding site. Residue His-272 participates in Fe cation binding. Residues 274–288 (FLAAWPVVGIWFTAL) form a helical membrane-spanning segment. The [CaMn4O5] cluster site is built by His-332, Glu-333, and Ala-344. The propeptide occupies 345–353 (AIEAPAVNG).

Belongs to the reaction center PufL/M/PsbA/D family. In terms of assembly, PSII is composed of 1 copy each of membrane proteins PsbA, PsbB, PsbC, PsbD, PsbE, PsbF, PsbH, PsbI, PsbJ, PsbK, PsbL, PsbM, PsbT, PsbX, PsbY, PsbZ, Psb30/Ycf12, at least 3 peripheral proteins of the oxygen-evolving complex and a large number of cofactors. It forms dimeric complexes. The D1/D2 heterodimer binds P680, chlorophylls that are the primary electron donor of PSII, and subsequent electron acceptors. It shares a non-heme iron and each subunit binds pheophytin, quinone, additional chlorophylls, carotenoids and lipids. D1 provides most of the ligands for the Mn4-Ca-O5 cluster of the oxygen-evolving complex (OEC). There is also a Cl(-1) ion associated with D1 and D2, which is required for oxygen evolution. The PSII complex binds additional chlorophylls, carotenoids and specific lipids. serves as cofactor. Tyr-161 forms a radical intermediate that is referred to as redox-active TyrZ, YZ or Y-Z. In terms of processing, C-terminally processed by CTPA; processing is essential to allow assembly of the oxygen-evolving complex and thus photosynthetic growth.

The protein localises to the plastid. Its subcellular location is the chloroplast thylakoid membrane. The enzyme catalyses 2 a plastoquinone + 4 hnu + 2 H2O = 2 a plastoquinol + O2. In terms of biological role, photosystem II (PSII) is a light-driven water:plastoquinone oxidoreductase that uses light energy to abstract electrons from H(2)O, generating O(2) and a proton gradient subsequently used for ATP formation. It consists of a core antenna complex that captures photons, and an electron transfer chain that converts photonic excitation into a charge separation. The D1/D2 (PsbA/PsbD) reaction center heterodimer binds P680, the primary electron donor of PSII as well as several subsequent electron acceptors. This chain is Photosystem II protein D1, found in Conocephalum japonicum (Liverwort).